The chain runs to 599 residues: MTTQAPPTSLLPLTPEQLARLQAAIGEYSPTQLAWLSGYFWGMVNQQPGSVAIAPVASAAASITVISASQTGNARRLAEQLRDDLLAAKLSVTLVNAGDYKFKQIAQERLLVIVASTQGEGEPAEEAVALHKFLFSKKAPKLNETAFAVFGLGDTSYENFCQSGKDFDGKLAELGAERLVERVDADVEYQELATAWRKQVVEVLKARAPAENAAPGVLASGAVDLLDSSPYSKEQPLTAQLAVKQKITGRASDKDVRHIEIDLGDSGLRYRPGDALGVWFDNDPALVDELVQLLWLKGDEPVEVEGKTLPLAQALRSHFELTQNTTPIVDKYAALSRDEKLIGLLADKAALQHYAHNTPIVDMVRQAPADLNAEQLIGLLRPLTPRLYSIASSQAENENEVHVTVGVVRYDIDGRARAGGASSFLADRLEEDGDVRVFIEHNDNFRLPANPETPVIMIGPGTGIAPFRAFMQQRDADGAGGKNWLFFGNPHFTEDFLYQVEWQRYVKDGLLTRIDLAWSRDQQHKVYVQDKLREQGAEVWRWIQEGAHIYVCGDANRMAKDVENTLLELVAEHGGMDTELADEFLSELRLERRYQRDVY.

The region spanning 63–201 (ITVISASQTG…LATAWRKQVV (139 aa)) is the Flavodoxin-like domain. FMN-binding positions include 69–74 (SQTGNA), 116–119 (STQG), and 152–161 (LGDTSYENFC). The FAD-binding FR-type domain maps to 234–448 (EQPLTAQLAV…IEHNDNFRLP (215 aa)). Residues threonine 322, histidine 356, 386 to 389 (RLYS), 404 to 406 (TVG), tyrosine 410, and 419 to 422 (GGAS) each bind FAD. Residues 519 to 520 (SR), 525 to 529 (KVYVQ), and aspartate 561 each bind NADP(+). Tyrosine 599 is an FAD binding site.

This sequence belongs to the NADPH-dependent sulphite reductase flavoprotein subunit CysJ family. In the N-terminal section; belongs to the flavodoxin family. It in the C-terminal section; belongs to the flavoprotein pyridine nucleotide cytochrome reductase family. As to quaternary structure, alpha(8)-beta(8). The alpha component is a flavoprotein, the beta component is a hemoprotein. It depends on FAD as a cofactor. Requires FMN as cofactor.

It catalyses the reaction hydrogen sulfide + 3 NADP(+) + 3 H2O = sulfite + 3 NADPH + 4 H(+). It functions in the pathway sulfur metabolism; hydrogen sulfide biosynthesis; hydrogen sulfide from sulfite (NADPH route): step 1/1. Component of the sulfite reductase complex that catalyzes the 6-electron reduction of sulfite to sulfide. This is one of several activities required for the biosynthesis of L-cysteine from sulfate. The flavoprotein component catalyzes the electron flow from NADPH -&gt; FAD -&gt; FMN to the hemoprotein component. The chain is Sulfite reductase [NADPH] flavoprotein alpha-component from Serratia proteamaculans (strain 568).